The chain runs to 300 residues: Ribosomal protein L11 methyltransferase (300 aa).

Residues Thr-152, Gly-173, Asp-195, and Asn-234 each contribute to the S-adenosyl-L-methionine site.

The protein belongs to the methyltransferase superfamily. PrmA family.

It localises to the cytoplasm. It carries out the reaction L-lysyl-[protein] + 3 S-adenosyl-L-methionine = N(6),N(6),N(6)-trimethyl-L-lysyl-[protein] + 3 S-adenosyl-L-homocysteine + 3 H(+). Its function is as follows. Methylates ribosomal protein L11. This Burkholderia mallei (strain NCTC 10247) protein is Ribosomal protein L11 methyltransferase.